The chain runs to 81 residues: Costars family protein ABRACL (81 aa).

This sequence belongs to the costars family.

This Salmo salar (Atlantic salmon) protein is Costars family protein ABRACL.